The following is a 211-amino-acid chain: Ribosomal RNA small subunit methyltransferase G (211 aa).

S-adenosyl-L-methionine is bound by residues G73, 125–126 (IE), and R141.

This sequence belongs to the methyltransferase superfamily. RNA methyltransferase RsmG family.

It localises to the cytoplasm. The catalysed reaction is guanosine(527) in 16S rRNA + S-adenosyl-L-methionine = N(7)-methylguanosine(527) in 16S rRNA + S-adenosyl-L-homocysteine. Its function is as follows. Specifically methylates the N7 position of guanine in position 527 of 16S rRNA. In Methylobacterium radiotolerans (strain ATCC 27329 / DSM 1819 / JCM 2831 / NBRC 15690 / NCIMB 10815 / 0-1), this protein is Ribosomal RNA small subunit methyltransferase G.